A 205-amino-acid chain; its full sequence is Large ribosomal subunit protein uL4 (205 aa).

The tract at residues 65 to 99 (RQKGTGGARHGSRKSPTFRHGGVYKGPTPRSHGHD) is disordered.

Belongs to the universal ribosomal protein uL4 family. In terms of assembly, part of the 50S ribosomal subunit.

In terms of biological role, one of the primary rRNA binding proteins, this protein initially binds near the 5'-end of the 23S rRNA. It is important during the early stages of 50S assembly. It makes multiple contacts with different domains of the 23S rRNA in the assembled 50S subunit and ribosome. Functionally, forms part of the polypeptide exit tunnel. In Ruegeria pomeroyi (strain ATCC 700808 / DSM 15171 / DSS-3) (Silicibacter pomeroyi), this protein is Large ribosomal subunit protein uL4.